Consider the following 81-residue polypeptide: Photosystem I iron-sulfur center (81 aa).

4Fe-4S ferredoxin-type domains follow at residues serine 2–tryptophan 31 and isoleucine 39–tyrosine 68. Cysteine 11, cysteine 14, cysteine 17, cysteine 21, cysteine 48, cysteine 51, cysteine 54, and cysteine 58 together coordinate [4Fe-4S] cluster.

As to quaternary structure, the cyanobacterial PSI reaction center is composed of one copy each of PsaA,B,C,D,E,F,I,J,K,L,M and X, and forms trimeric complexes. It depends on [4Fe-4S] cluster as a cofactor.

The protein localises to the cellular thylakoid membrane. It carries out the reaction reduced [plastocyanin] + hnu + oxidized [2Fe-2S]-[ferredoxin] = oxidized [plastocyanin] + reduced [2Fe-2S]-[ferredoxin]. Apoprotein for the two 4Fe-4S centers FA and FB of photosystem I (PSI); essential for photochemical activity. FB is the terminal electron acceptor of PSI, donating electrons to ferredoxin. The C-terminus interacts with PsaA/B/D and helps assemble the protein into the PSI complex. Required for binding of PsaD and PsaE to PSI. PSI is a plastocyanin/cytochrome c6-ferredoxin oxidoreductase, converting photonic excitation into a charge separation, which transfers an electron from the donor P700 chlorophyll pair to the spectroscopically characterized acceptors A0, A1, FX, FA and FB in turn. In Synechococcus elongatus (strain ATCC 33912 / PCC 7942 / FACHB-805) (Anacystis nidulans R2), this protein is Photosystem I iron-sulfur center.